A 131-amino-acid chain; its full sequence is MKSCGLLPFTVLLALGILAPWTVEGGKNDAIKIGACPAKKPAQCLKLEKPQCRTDWECPGKQRCCQDACGSKCVNPVPIRKPVWRKPGRCVKTQARCMMLNPPNVCQRDGQCDGKYKCCEGICGKVCLPPM.

The signal sequence occupies residues 1–25; it reads MKSCGLLPFTVLLALGILAPWTVEG. WAP domains lie at 29–77 and 83–131; these read DAIK…VNPV and VWRK…LPPM. Disulfide bonds link C36/C65, C44/C69, C52/C64, C58/C73, C90/C119, C97/C123, C106/C118, and C112/C127. Positions 85–131 are elastase inhibitory domain; it reads RKPGRCVKTQARCMMLNPPNVCQRDGQCDGKYKCCEGICGKVCLPPM.

Interacts with GRN; interaction protects progranulin from proteolysis. In terms of tissue distribution, detected in bronchial epithelial cells. Detected in bronchoalveolar fluid after infection with M.tuberculosis (at protein level). Highest expression in lung, spleen, intestine and epididymis with lower levels in liver and seminal vesicle. No expression in brain, heart, kidney and muscle.

The protein localises to the secreted. Functionally, acid-stable proteinase inhibitor with strong affinities for trypsin, chymotrypsin, elastase, and cathepsin G. Modulates the innate immune response after bacterial infection. Contributes to regulate the inflammatory and immune responses to the intracellular parasite L.major. Down-regulates responses to bacterial lipopolysaccharide (LPS). Plays a role in regulating the activation of NF-kappa-B and inflammatory responses. Has antimicrobial activity against mycobacteria, but not against salmonella. Contributes to normal resistance against infection by M.tuberculosis. Required for normal resistance to L.major. Required for normal wound healing, probably by preventing tissue damage by limiting protease activity. Together with ELANE, required for normal differentiation and proliferation of bone marrow myeloid cells. In Mus musculus (Mouse), this protein is Antileukoproteinase (Slpi).